A 278-amino-acid chain; its full sequence is Small ribosomal subunit protein uS5 (278 aa).

Residues 1–43 (MADAPAPAGGRGGFRGGFGGRGRGRGRGRGRGRGRGRGAKDGD) are disordered. Over residues 9–21 (GGRGGFRGGFGGR) the composition is skewed to gly residues. The span at 22–37 (GRGRGRGRGRGRGRGR) shows a compositional bias: basic residues. Residues 88–151 (LKDEVLKIMP…ILAKLSVVPV (64 aa)) form the S5 DRBM domain.

It belongs to the universal ribosomal protein uS5 family.

Functionally, component of the ribosome, a large ribonucleoprotein complex responsible for the synthesis of proteins in the cell. The small ribosomal subunit (SSU) binds messenger RNAs (mRNAs) and translates the encoded message by selecting cognate aminoacyl-transfer RNA (tRNA) molecules. The large subunit (LSU) contains the ribosomal catalytic site termed the peptidyl transferase center (PTC), which catalyzes the formation of peptide bonds, thereby polymerizing the amino acids delivered by tRNAs into a polypeptide chain. The nascent polypeptides leave the ribosome through a tunnel in the LSU and interact with protein factors that function in enzymatic processing, targeting, and the membrane insertion of nascent chains at the exit of the ribosomal tunnel. Plays a role in the assembly and function of the 40S ribosomal subunit. Mutations in this protein affects the control of translational fidelity. Involved in nucleolar processing of pre-18S ribosomal RNA and ribosome assembly. The protein is Small ribosomal subunit protein uS5 (RPS2) of Urechis caupo (Innkeeper worm).